A 30-amino-acid chain; its full sequence is YCQKWMWTCDSERKCCEGMVCRLWCKKKLW.

Cystine bridges form between cysteine 2–cysteine 16, cysteine 9–cysteine 21, and cysteine 15–cysteine 25. The segment at lysine 26–tryptophan 30 is flexible tail region important for ability to inhibit Nav channel. Residues leucine 29–tryptophan 30 are hydrophobic dyad that anchors the toxin into the membrane while positioning it over the S3 helix of Nav1.7/SCN9A.

Belongs to the neurotoxin 30 (phrixotoxin) family. In terms of tissue distribution, expressed by the venom gland.

It is found in the secreted. Its function is as follows. Gating-modifier toxin that targets voltage-gated sodium channels with a selective activity on Nav1.7/SCN9A (IC(50)=1-1.5 nM). It inhibits both activation and inactivation. For inhibition of activation, it is 100-fold more selective for Nav1.7/SCN9A (IC(50)=0.26-3) than for other sodium channels (Nav1.2/SCN2A (IC(50)=40-540 nM), Nav1.3/SCN3A (IC(50)=102 nM), Nav1.4/SCN4A (IC(50)=30-39 nM), Nav1.5/SCN5A (IC(50)=19-90 nM), Nav1.6/SCN8A (IC(50)=26 nM), and Nav1.8/SCN10A (IC(50)=146 nM)). For inhibition of inactivation, it is 20-fold more potent in inhibiting inactivation on Nav1.7/SCN9A (IC(50)=250 nM) than other channels (about 4.6 uM for all channels). It also weakly inhibits Cav1.2/CACNA1C and Cav3.2/CACNA1H (29% block at 1 uM). It inhibits Nav1.7/SCN9A activation by interacting with DII and impairs Nav1.7/SCN9A inactivation by interacting with DIV. It docks on top of the DII S3 helix Nav1.7/SCN9A. It is about 60-fold less active on Nav1.7/SCN9A at depolarized potential (0 mV; IC(50)=15 nM), compared to -120 mV potential (IC(50)=0.26 nM). This toxin binds to lipid membrane. This ability correlates with hNav1.7/SCN9A inhibition, showing that membrane binding is the first step in the inhibitory mechanism of this toxin. It inhibits Nav1.2/SCN2A less potently when it is coexpressed with SCN2B or SCN4B than when it is expressed alone, showing that beta subunits (SCN2B and SCN4B) have a protective effect. The chain is Beta/omega-theraphotoxin-Tp2a from Thrixopelma pruriens (Peruvian green velvet tarantula).